The primary structure comprises 342 residues: MNTADFDFHLPEELIAQTPLEKRDASKLLIVNRETGEMQDKHFHSIIDMLEPGDALVMNDTRVLPARLYGQKVETGSHVELLLLKNTSGDEWEVLAKPAKRLKVGTRISFGDGRLSAVVTEELTHGGRIVRFEYQRIFLEVLESLGEMPLPPYIHEKLDDRERYQTVYAKESGSAAAPTAGLHFTKELLAEIQAKGVHLVYLTLHVGLGTFRPVSVDNLDEHEMHSEFYQLSEEAAATLRSVKENGGRVIAVGTTSIRTLETIGSKFDGQIQADSGWTNIFIKPGYEWKVVDAFSTNFHLPKSTLVMLVSAFAGRELVLDAYHHSIQEHYRFFSFGDAMFIY.

It belongs to the QueA family. Monomer.

It is found in the cytoplasm. The enzyme catalyses 7-aminomethyl-7-carbaguanosine(34) in tRNA + S-adenosyl-L-methionine = epoxyqueuosine(34) in tRNA + adenine + L-methionine + 2 H(+). It functions in the pathway tRNA modification; tRNA-queuosine biosynthesis. Transfers and isomerizes the ribose moiety from AdoMet to the 7-aminomethyl group of 7-deazaguanine (preQ1-tRNA) to give epoxyqueuosine (oQ-tRNA). The sequence is that of S-adenosylmethionine:tRNA ribosyltransferase-isomerase from Streptococcus pneumoniae (strain ATCC BAA-255 / R6).